Reading from the N-terminus, the 960-residue chain is RasGEF domain-containing serine/threonine-protein kinase X (960 aa).

In terms of domain architecture, Protein kinase spans 21–274 (LEFNEKIGKG…FDEILSQLKV (254 aa)). ATP is bound by residues 27 to 35 (IGKGSFGSV) and Lys48. Asp140 (proton acceptor) is an active-site residue. A compositionally biased stretch (low complexity) spans 314 to 368 (NISFSPNNSNNNNNNNNNISNISPDITTGIQQINLSSSGGSNNSSPSTPPQGSQL). Disordered regions lie at residues 314 to 372 (NISF…VSLA) and 393 to 413 (GQLS…HKPS). Residues 437-565 (PCYAALTSHI…LGTTISNNEL (129 aa)) enclose the N-terminal Ras-GEF domain. Residues 596–651 (NNNNNNNNNPVNNINNINNNNSVNSSSSNNNNNNNNNNSNNNNNNNNNNNNNNNNN) form a disordered region. The region spanning 712–957 (HSTELARQIT…KNNSLKCEPP (246 aa)) is the Ras-GEF domain.

It belongs to the protein kinase superfamily. TKL Ser/Thr protein kinase family.

It carries out the reaction L-seryl-[protein] + ATP = O-phospho-L-seryl-[protein] + ADP + H(+). It catalyses the reaction L-threonyl-[protein] + ATP = O-phospho-L-threonyl-[protein] + ADP + H(+). Functionally, promotes the exchange of Ras-bound GDP by GTP. This is RasGEF domain-containing serine/threonine-protein kinase X (gefX) from Dictyostelium discoideum (Social amoeba).